The sequence spans 296 residues: Formamidopyrimidine-DNA glycosylase (296 aa).

The active-site Schiff-base intermediate with DNA is Pro2. Glu3 functions as the Proton donor in the catalytic mechanism. The active-site Proton donor; for beta-elimination activity is Lys58. Residues His106, Arg125, and Lys167 each contribute to the DNA site. The FPG-type zinc finger occupies 258–294 (RVYDRVGLPCSRPGCAGAITRIVQANRSTFFCATCQP). Arg284 (proton donor; for delta-elimination activity) is an active-site residue.

It belongs to the FPG family. As to quaternary structure, monomer. Requires Zn(2+) as cofactor.

It carries out the reaction Hydrolysis of DNA containing ring-opened 7-methylguanine residues, releasing 2,6-diamino-4-hydroxy-5-(N-methyl)formamidopyrimidine.. The enzyme catalyses 2'-deoxyribonucleotide-(2'-deoxyribose 5'-phosphate)-2'-deoxyribonucleotide-DNA = a 3'-end 2'-deoxyribonucleotide-(2,3-dehydro-2,3-deoxyribose 5'-phosphate)-DNA + a 5'-end 5'-phospho-2'-deoxyribonucleoside-DNA + H(+). In terms of biological role, involved in base excision repair of DNA damaged by oxidation or by mutagenic agents. Acts as a DNA glycosylase that recognizes and removes damaged bases. Has a preference for oxidized purines, such as 7,8-dihydro-8-oxoguanine (8-oxoG). Has AP (apurinic/apyrimidinic) lyase activity and introduces nicks in the DNA strand. Cleaves the DNA backbone by beta-delta elimination to generate a single-strand break at the site of the removed base with both 3'- and 5'-phosphates. In Methylobacterium radiotolerans (strain ATCC 27329 / DSM 1819 / JCM 2831 / NBRC 15690 / NCIMB 10815 / 0-1), this protein is Formamidopyrimidine-DNA glycosylase.